Reading from the N-terminus, the 160-residue chain is UPF0178 protein PLES_56411 (160 aa).

It belongs to the UPF0178 family.

In Pseudomonas aeruginosa (strain LESB58), this protein is UPF0178 protein PLES_56411.